Consider the following 104-residue polypeptide: L-rhamnose mutarotase (104 aa).

Tyrosine 18 contacts substrate. The Proton donor role is filled by histidine 22. Substrate contacts are provided by residues tyrosine 41 and 76-77; that span reads WW.

This sequence belongs to the rhamnose mutarotase family. Homodimer.

It localises to the cytoplasm. It carries out the reaction alpha-L-rhamnose = beta-L-rhamnose. It functions in the pathway carbohydrate metabolism; L-rhamnose metabolism. Involved in the anomeric conversion of L-rhamnose. The polypeptide is L-rhamnose mutarotase (Escherichia coli O127:H6 (strain E2348/69 / EPEC)).